The chain runs to 140 residues: MALAPARTKYRKSQKGSRAGNAKRGNTLAFGEFGLQSLTRGPMTGQQIEAARVTISRHLKRKGKLWIRVFPHKPITKKPAEVRQGQGKGPVEFYIAQIRPGAVLFELAGVPATTAKEAFRLADAKLPFHCRFIAREGAVV.

A disordered region spans residues Met1–Arg24.

Belongs to the universal ribosomal protein uL16 family. Part of the 50S ribosomal subunit.

Functionally, binds 23S rRNA and is also seen to make contacts with the A and possibly P site tRNAs. In Opitutus terrae (strain DSM 11246 / JCM 15787 / PB90-1), this protein is Large ribosomal subunit protein uL16.